We begin with the raw amino-acid sequence, 139 residues long: Ribosome-binding factor A (139 aa).

The segment at glutamate 112–glutamate 139 is disordered. Residues alanine 119–alanine 132 are compositionally biased toward low complexity.

The protein belongs to the RbfA family. In terms of assembly, monomer. Binds 30S ribosomal subunits, but not 50S ribosomal subunits or 70S ribosomes.

It localises to the cytoplasm. One of several proteins that assist in the late maturation steps of the functional core of the 30S ribosomal subunit. Associates with free 30S ribosomal subunits (but not with 30S subunits that are part of 70S ribosomes or polysomes). Required for efficient processing of 16S rRNA. May interact with the 5'-terminal helix region of 16S rRNA. The polypeptide is Ribosome-binding factor A (Anaeromyxobacter dehalogenans (strain 2CP-1 / ATCC BAA-258)).